The sequence spans 130 residues: Small ribosomal subunit protein uS9 (130 aa).

The protein belongs to the universal ribosomal protein uS9 family.

The chain is Small ribosomal subunit protein uS9 from Chromobacterium violaceum (strain ATCC 12472 / DSM 30191 / JCM 1249 / CCUG 213 / NBRC 12614 / NCIMB 9131 / NCTC 9757 / MK).